The primary structure comprises 553 residues: Chaperonin GroEL 2 (553 aa).

Residues 29–32 (TLGP), 86–90 (DGTTT), glycine 414, and aspartate 495 each bind ATP.

It belongs to the chaperonin (HSP60) family. As to quaternary structure, forms a cylinder of 14 subunits composed of two heptameric rings stacked back-to-back. Interacts with the co-chaperonin GroES.

The protein localises to the cytoplasm. The enzyme catalyses ATP + H2O + a folded polypeptide = ADP + phosphate + an unfolded polypeptide.. In terms of biological role, together with its co-chaperonin GroES, plays an essential role in assisting protein folding. The GroEL-GroES system forms a nano-cage that allows encapsulation of the non-native substrate proteins and provides a physical environment optimized to promote and accelerate protein folding. The protein is Chaperonin GroEL 2 of Gloeobacter violaceus (strain ATCC 29082 / PCC 7421).